The primary structure comprises 524 residues: Cytochrome P450 704B1 (524 aa).

The helical transmembrane segment at 2 to 22 threads the bilayer; it reads SLCLVIACMVTSWIFLHRWGQ. Cysteine 471 contributes to the heme binding site.

It belongs to the cytochrome P450 family. The cofactor is heme.

Its subcellular location is the membrane. It carries out the reaction an omega-methyl-long-chain fatty acid + reduced [NADPH--hemoprotein reductase] + O2 = an omega-hydroxy-long-chain fatty acid + oxidized [NADPH--hemoprotein reductase] + H2O + H(+). Functionally, involved in pollen wall development. Catalyzes the conversion of long-chain fatty acids to the corresponding omega-hydroxylated fatty acids. Omega-hydroxylated fatty acids, together with in-chain hydroxylated fatty acids, are key monomeric aliphatic building blocks for sporopollenin synthesis during exine formation. This Arabidopsis thaliana (Mouse-ear cress) protein is Cytochrome P450 704B1 (CYP704B1).